The following is a 268-amino-acid chain: Interleukin-1 beta (268 aa).

The propeptide occupies 1-116; it reads MATVPELTSE…TWDDYSLECD (116 aa).

The protein belongs to the IL-1 family. Monomer. In its precursor form, weakly interacts with full-length MEFV; the mature cytokine does not interact at all. Interacts with integrins ITGAV:ITGBV and ITGA5:ITGB1; integrin-binding is required for IL1B signaling. Interacts with cargo receptor TMED10; the interaction is direct and is required for the secretion of IL1B mature form. Interacts with HSP90AB1; the interaction facilitates cargo translocation into the ERGIC. Interacts with HSP90B1; the interaction facilitates cargo translocation into the ERGIC.

The protein resides in the cytoplasm. It localises to the cytosol. Its subcellular location is the secreted. It is found in the lysosome. The protein localises to the extracellular exosome. Its function is as follows. Potent pro-inflammatory cytokine. Initially discovered as the major endogenous pyrogen, induces prostaglandin synthesis, neutrophil influx and activation, T-cell activation and cytokine production, B-cell activation and antibody production, and fibroblast proliferation and collagen production. Promotes Th17 differentiation of T-cells. Synergizes with IL12/interleukin-12 to induce IFNG synthesis from T-helper 1 (Th1) cells. Plays a role in angiogenesis by inducing VEGF production synergistically with TNF and IL6. Involved in transduction of inflammation downstream of pyroptosis: its mature form is specifically released in the extracellular milieu by passing through the gasdermin-D (GSDMD) pore. This is Interleukin-1 beta (IL1B) from Oryctolagus cuniculus (Rabbit).